The sequence spans 110 residues: Large ribosomal subunit protein uL22 (110 aa).

It belongs to the universal ribosomal protein uL22 family. Part of the 50S ribosomal subunit.

This protein binds specifically to 23S rRNA; its binding is stimulated by other ribosomal proteins, e.g. L4, L17, and L20. It is important during the early stages of 50S assembly. It makes multiple contacts with different domains of the 23S rRNA in the assembled 50S subunit and ribosome. Its function is as follows. The globular domain of the protein is located near the polypeptide exit tunnel on the outside of the subunit, while an extended beta-hairpin is found that lines the wall of the exit tunnel in the center of the 70S ribosome. This chain is Large ribosomal subunit protein uL22, found in Delftia acidovorans (strain DSM 14801 / SPH-1).